The sequence spans 39 residues: Omega-theraphotoxin-Ba1b (39 aa).

3 disulfides stabilise this stretch: Cys-4/Cys-17, Cys-8/Cys-31, and Cys-25/Cys-36.

It belongs to the neurotoxin 12 (Hwtx-2) family. 06 (TXP1) subfamily. As to expression, expressed by the venom gland.

It is found in the secreted. In terms of biological role, inhibits voltage-gated calcium channels (Cav) in rat cerebellar granule cells. Has insecticidal activity to crickets (Acheta domesticus). Is not toxic to mice. In Brachypelma albiceps (Mexican golden redrump tarantula), this protein is Omega-theraphotoxin-Ba1b.